Here is a 292-residue protein sequence, read N- to C-terminus: 4-hydroxy-tetrahydrodipicolinate synthase (292 aa).

Thr45 is a binding site for pyruvate. Tyr133 serves as the catalytic Proton donor/acceptor. The Schiff-base intermediate with substrate role is filled by Lys161. Ile203 contacts pyruvate.

It belongs to the DapA family. Homotetramer; dimer of dimers.

It is found in the cytoplasm. The enzyme catalyses L-aspartate 4-semialdehyde + pyruvate = (2S,4S)-4-hydroxy-2,3,4,5-tetrahydrodipicolinate + H2O + H(+). It participates in amino-acid biosynthesis; L-lysine biosynthesis via DAP pathway; (S)-tetrahydrodipicolinate from L-aspartate: step 3/4. Functionally, catalyzes the condensation of (S)-aspartate-beta-semialdehyde [(S)-ASA] and pyruvate to 4-hydroxy-tetrahydrodipicolinate (HTPA). The protein is 4-hydroxy-tetrahydrodipicolinate synthase of Salmonella typhi.